A 632-amino-acid chain; its full sequence is Biosynthetic arginine decarboxylase (632 aa).

N6-(pyridoxal phosphate)lysine is present on Lys101. 281 to 291 serves as a coordination point for substrate; sequence FDVGGGLGVDY.

The protein belongs to the Orn/Lys/Arg decarboxylase class-II family. SpeA subfamily. The cofactor is Mg(2+). Requires pyridoxal 5'-phosphate as cofactor.

It catalyses the reaction L-arginine + H(+) = agmatine + CO2. It functions in the pathway amine and polyamine biosynthesis; agmatine biosynthesis; agmatine from L-arginine: step 1/1. Its function is as follows. Catalyzes the biosynthesis of agmatine from arginine. This chain is Biosynthetic arginine decarboxylase, found in Salmonella dublin (strain CT_02021853).